The chain runs to 345 residues: Fe(3+) ions import ATP-binding protein FbpC (345 aa).

The region spanning 3–233 (LSLKAATVRF…PADEFVARFL (231 aa)) is the ABC transporter domain. Residue 35 to 42 (GPSGSGKS) coordinates ATP.

It belongs to the ABC transporter superfamily. Fe(3+) ion importer (TC 3.A.1.10) family. As to quaternary structure, the complex is composed of two ATP-binding proteins (FbpC), two transmembrane proteins (FbpB) and a solute-binding protein (FbpA).

The protein resides in the cell membrane. It catalyses the reaction Fe(3+)(out) + ATP + H2O = Fe(3+)(in) + ADP + phosphate + H(+). Functionally, part of the ABC transporter complex FbpABC involved in Fe(3+) ions import. Responsible for energy coupling to the transport system. This chain is Fe(3+) ions import ATP-binding protein FbpC, found in Streptomyces avermitilis (strain ATCC 31267 / DSM 46492 / JCM 5070 / NBRC 14893 / NCIMB 12804 / NRRL 8165 / MA-4680).